The chain runs to 210 residues: Imidazole glycerol phosphate synthase subunit HisH (210 aa).

Residues 1 to 210 enclose the Glutamine amidotransferase type-1 domain; the sequence is MIAILDYGMG…KLLENFIRFI (210 aa). Residue C79 is the Nucleophile of the active site. Active-site residues include H191 and E193.

Heterodimer of HisH and HisF.

It is found in the cytoplasm. It carries out the reaction 5-[(5-phospho-1-deoxy-D-ribulos-1-ylimino)methylamino]-1-(5-phospho-beta-D-ribosyl)imidazole-4-carboxamide + L-glutamine = D-erythro-1-(imidazol-4-yl)glycerol 3-phosphate + 5-amino-1-(5-phospho-beta-D-ribosyl)imidazole-4-carboxamide + L-glutamate + H(+). The catalysed reaction is L-glutamine + H2O = L-glutamate + NH4(+). It participates in amino-acid biosynthesis; L-histidine biosynthesis; L-histidine from 5-phospho-alpha-D-ribose 1-diphosphate: step 5/9. Its function is as follows. IGPS catalyzes the conversion of PRFAR and glutamine to IGP, AICAR and glutamate. The HisH subunit catalyzes the hydrolysis of glutamine to glutamate and ammonia as part of the synthesis of IGP and AICAR. The resulting ammonia molecule is channeled to the active site of HisF. The sequence is that of Imidazole glycerol phosphate synthase subunit HisH from Leptospira interrogans serogroup Icterohaemorrhagiae serovar copenhageni (strain Fiocruz L1-130).